The chain runs to 587 residues: MQEQKLQENDFSTLQTFKRLWPMIKPFKAGLIASGIALVFNALADSGLIYLLKPLLDDGFGKANHSFLKIMAFVVVGMIILRGVTNFISNYCLAWVSGKVVMTMRRRLFKHLMFMPVSFFDRNSTGKLLSRITYDSEMIASSSSGSLITIVREGAYIISLLAVMFYTSWELTLVLFVIGPIIAVLITIVSKIFRKLSKNLQDSMGELTATTEQMLKGHKVVISFGGQFVEEERFNKVSNNMRRKGMKMVTADSISDPVVQIIASLALVAVLFLATTPLIAEDNLSAGSFTVVFSSMLAMMRPLKSLTNVNSQFQRGMAACQTLFAILDLEPEKDNGTYKAEPAKGALEFKNVSFAYQGKEELALNNISFSVPAGKTVALVGRSGSGKSTIANLVTRFYDIEQGEILLDGVNIQDYRLSNLRENCAVVSQQVHLFNDTIANNIAYAAQDKYSREEIIAAAKAAYALEFIEKLPQGFDTVIGENGASLSGGQRQRLAIARALLRNSPVLILDEATSALDTESERAIQSALDELKKDRTVIVIAHRLSTIENADEILVIDHGEIRERGNHKALLEQNGAYKQLYSMQFSG.

Helical transmembrane passes span 31 to 51, 68 to 88, 145 to 165, 169 to 189, and 259 to 279; these read LIASGIALVFNALADSGLIYL, LKIMAFVVVGMIILRGVTNFI, GSLITIVREGAYIISLLAVMF, WELTLVLFVIGPIIAVLITIV, and VQIIASLALVAVLFLATTPLI. The ABC transmembrane type-1 domain maps to 32–315; sequence IASGIALVFN…LTNVNSQFQR (284 aa). The ABC transporter domain occupies 347–583; it reads LEFKNVSFAY…NGAYKQLYSM (237 aa). Position 381–388 (381–388) interacts with ATP; that stretch reads GRSGSGKS.

Belongs to the ABC transporter superfamily. Lipid exporter (TC 3.A.1.106) family. As to quaternary structure, homodimer.

The protein localises to the cell inner membrane. It carries out the reaction ATP + H2O + lipid A-core oligosaccharideSide 1 = ADP + phosphate + lipid A-core oligosaccharideSide 2.. Its function is as follows. Involved in lipopolysaccharide (LPS) biosynthesis. Translocates lipid A-core from the inner to the outer leaflet of the inner membrane. Transmembrane domains (TMD) form a pore in the inner membrane and the ATP-binding domain (NBD) is responsible for energy generation. This Haemophilus influenzae (strain 86-028NP) protein is ATP-dependent lipid A-core flippase.